The following is a 311-amino-acid chain: Pyrimidine-specific ribonucleoside hydrolase RihA (311 aa).

His240 is an active-site residue.

It belongs to the IUNH family. RihA subfamily.

Its function is as follows. Hydrolyzes with equal efficiency cytidine or uridine to ribose and cytosine or uracil, respectively. The protein is Pyrimidine-specific ribonucleoside hydrolase RihA of Escherichia coli O7:K1 (strain IAI39 / ExPEC).